The chain runs to 92 residues: Probable Fe(2+)-trafficking protein (92 aa).

Belongs to the Fe(2+)-trafficking protein family.

Could be a mediator in iron transactions between iron acquisition and iron-requiring processes, such as synthesis and/or repair of Fe-S clusters in biosynthetic enzymes. In Shewanella halifaxensis (strain HAW-EB4), this protein is Probable Fe(2+)-trafficking protein.